The sequence spans 269 residues: Putative phosphoenolpyruvate synthase regulatory protein (269 aa).

149–156 (GVSRSGKT) provides a ligand contact to ADP.

Belongs to the pyruvate, phosphate/water dikinase regulatory protein family. PSRP subfamily.

It catalyses the reaction [pyruvate, water dikinase] + ADP = [pyruvate, water dikinase]-phosphate + AMP + H(+). The catalysed reaction is [pyruvate, water dikinase]-phosphate + phosphate + H(+) = [pyruvate, water dikinase] + diphosphate. Functionally, bifunctional serine/threonine kinase and phosphorylase involved in the regulation of the phosphoenolpyruvate synthase (PEPS) by catalyzing its phosphorylation/dephosphorylation. This is Putative phosphoenolpyruvate synthase regulatory protein from Colwellia psychrerythraea (strain 34H / ATCC BAA-681) (Vibrio psychroerythus).